Here is a 20-residue protein sequence, read N- to C-terminus: Unknown protein NF042 from 2D-PAGE (20 aa).

In Naegleria fowleri (Brain eating amoeba), this protein is Unknown protein NF042 from 2D-PAGE.